Consider the following 63-residue polypeptide: Small ribosomal subunit protein uS14 (63 aa).

Residues Cys-26, Cys-29, Cys-42, and Cys-45 each contribute to the Zn(2+) site.

It belongs to the universal ribosomal protein uS14 family. Zinc-binding uS14 subfamily. As to quaternary structure, part of the 30S ribosomal subunit. Contacts proteins S3 and S10. The cofactor is Zn(2+).

Functionally, binds 16S rRNA, required for the assembly of 30S particles and may also be responsible for determining the conformation of the 16S rRNA at the A site. The protein is Small ribosomal subunit protein uS14 of Gloeobacter violaceus (strain ATCC 29082 / PCC 7421).